The primary structure comprises 93 residues: Large ribosomal subunit protein uL23c (93 aa).

It belongs to the universal ribosomal protein uL23 family. In terms of assembly, part of the 50S ribosomal subunit.

The protein localises to the plastid. The protein resides in the chloroplast. In terms of biological role, binds to 23S rRNA. This Adiantum capillus-veneris (Maidenhair fern) protein is Large ribosomal subunit protein uL23c (rpl23).